Consider the following 307-residue polypeptide: Aspartate carbamoyltransferase catalytic subunit (307 aa).

Residues Arg54 and Thr55 each coordinate carbamoyl phosphate. Residue Lys83 participates in L-aspartate binding. Carbamoyl phosphate is bound by residues Arg104, His132, and Gln135. L-aspartate-binding residues include Arg165 and Arg228. The carbamoyl phosphate site is built by Leu267 and Pro268.

Belongs to the aspartate/ornithine carbamoyltransferase superfamily. ATCase family. As to quaternary structure, heterododecamer (2C3:3R2) of six catalytic PyrB chains organized as two trimers (C3), and six regulatory PyrI chains organized as three dimers (R2).

It carries out the reaction carbamoyl phosphate + L-aspartate = N-carbamoyl-L-aspartate + phosphate + H(+). It functions in the pathway pyrimidine metabolism; UMP biosynthesis via de novo pathway; (S)-dihydroorotate from bicarbonate: step 2/3. Functionally, catalyzes the condensation of carbamoyl phosphate and aspartate to form carbamoyl aspartate and inorganic phosphate, the committed step in the de novo pyrimidine nucleotide biosynthesis pathway. This Clostridium botulinum (strain Alaska E43 / Type E3) protein is Aspartate carbamoyltransferase catalytic subunit.